Here is a 1009-residue protein sequence, read N- to C-terminus: Dihydropyrimidine dehydrogenase [NADP(+)] (1009 aa).

The 31-residue stretch at 69 to 99 (RGALFESARCLKCADAPCQKGCPTQLDIKSF) folds into the 4Fe-4S ferredoxin-type 1 domain. [4Fe-4S] cluster-binding residues include Cys-78, Cys-81, Cys-86, and Cys-90. Residue Val-128 participates in FAD binding. [4Fe-4S] cluster-binding residues include Cys-129, Cys-135, Cys-139, and Gln-155. FAD is bound by residues 193 to 197 (GCGPT), 217 to 225 (EKEQYLGGL), Arg-234, and Leu-260. NADP(+)-binding positions include 339–342 (AGDT), 363–364 (RR), Arg-370, 436–438 (AFG), and 479–484 (DLVGNG). FAD is bound at residue 478–486 (GDLVGNGTT). FMN contacts are provided by residues Ser-548 and 572-573 (KT). Residues Asn-607 and 666–668 (NLS) each bind substrate. The active-site Proton acceptor is Cys-669. Lys-707 contributes to the FMN binding site. 734–735 (NT) serves as a coordination point for substrate. FMN contacts are provided by residues Gly-765, 791 to 793 (TGG), and 814 to 815 (CS). 4Fe-4S ferredoxin-type domains follow at residues 932–964 (VVALIDEDKCINCGKCYMTCNDSGYQAIKFDGK) and 965–995 (THIPLVTDLCTGCDLCLSVCPVPDCITMVPR). Residues Cys-941, Cys-944, Cys-947, Cys-951, Cys-974, Cys-977, Cys-980, and Cys-984 each coordinate [4Fe-4S] cluster.

The protein belongs to the dihydropyrimidine dehydrogenase family. As to quaternary structure, homodimer. [4Fe-4S] cluster serves as cofactor. It depends on FAD as a cofactor. Requires FMN as cofactor.

It is found in the cytoplasm. The catalysed reaction is 5,6-dihydrouracil + NADP(+) = uracil + NADPH + H(+). It participates in amino-acid biosynthesis; beta-alanine biosynthesis. Involved in pyrimidine base degradation. Catalyzes the reduction of uracil and thymine. This chain is Dihydropyrimidine dehydrogenase [NADP(+)] (pyd1), found in Dictyostelium discoideum (Social amoeba).